We begin with the raw amino-acid sequence, 206 residues long: LexA repressor (206 aa).

The segment at residues 28–48 (VREIGQAVGLASSSTVHGHLS) is a DNA-binding region (H-T-H motif). Catalysis depends on for autocatalytic cleavage activity residues Ser128 and Lys166.

The protein belongs to the peptidase S24 family. Homodimer.

It catalyses the reaction Hydrolysis of Ala-|-Gly bond in repressor LexA.. Its function is as follows. Represses a number of genes involved in the response to DNA damage (SOS response), including recA and lexA. In the presence of single-stranded DNA, RecA interacts with LexA causing an autocatalytic cleavage which disrupts the DNA-binding part of LexA, leading to derepression of the SOS regulon and eventually DNA repair. This is LexA repressor from Bacillus cytotoxicus (strain DSM 22905 / CIP 110041 / 391-98 / NVH 391-98).